The sequence spans 209 residues: Urease accessory protein UreG (209 aa).

GTP is bound at residue 18–25; that stretch reads GPVGSGKT.

The protein belongs to the SIMIBI class G3E GTPase family. UreG subfamily. Homodimer. UreD, UreF and UreG form a complex that acts as a GTP-hydrolysis-dependent molecular chaperone, activating the urease apoprotein by helping to assemble the nickel containing metallocenter of UreC. The UreE protein probably delivers the nickel.

It is found in the cytoplasm. In terms of biological role, facilitates the functional incorporation of the urease nickel metallocenter. This process requires GTP hydrolysis, probably effectuated by UreG. This Cupriavidus necator (strain ATCC 17699 / DSM 428 / KCTC 22496 / NCIMB 10442 / H16 / Stanier 337) (Ralstonia eutropha) protein is Urease accessory protein UreG.